Reading from the N-terminus, the 877-residue chain is Alanine--tRNA ligase (877 aa).

Zn(2+) contacts are provided by His-563, His-567, Cys-665, and His-669.

This sequence belongs to the class-II aminoacyl-tRNA synthetase family. Zn(2+) serves as cofactor.

It localises to the cytoplasm. It catalyses the reaction tRNA(Ala) + L-alanine + ATP = L-alanyl-tRNA(Ala) + AMP + diphosphate. In terms of biological role, catalyzes the attachment of alanine to tRNA(Ala) in a two-step reaction: alanine is first activated by ATP to form Ala-AMP and then transferred to the acceptor end of tRNA(Ala). Also edits incorrectly charged Ser-tRNA(Ala) and Gly-tRNA(Ala) via its editing domain. This is Alanine--tRNA ligase from Thermoanaerobacter pseudethanolicus (strain ATCC 33223 / 39E) (Clostridium thermohydrosulfuricum).